Reading from the N-terminus, the 435-residue chain is Evolutionarily conserved signaling intermediate in Toll pathway, mitochondrial (435 aa).

Residues 1–48 constitute a mitochondrion transit peptide; the sequence is MSWVQVNLLVRSLSRGWGGLCRPALSGTPFAQVSLQALRGLHCSAATH. Residue Lys372 forms a Glycyl lysine isopeptide (Lys-Gly) (interchain with G-Cter in ubiquitin) linkage. Residues 401-435 are disordered; that stretch reads LTTSRLEGQSPPHSPPKGPEEDDETIQAEQQQGQS.

It belongs to the ECSIT family. In terms of assembly, interacts with MAP3K1, SMAD4 and TRAF6. Interacts with SMAD1 only after BMP4-treatment. Part of the mitochondrial complex I assembly/MCIA complex that comprises at least the core subunits TMEM126B, NDUFAF1, ECSIT and ACAD9 and complement subunits such as COA1 and TMEM186. Interacts with NDUFAF1. Interacts with ACAD9. Interacts with TRIM59. Interacts with TMEM70 and TMEM242. Interacts (when ubiquitinated) with NF-kappa-B subunits RELA and NFKB1. Interacts with RIGI, IFIT1 and MAVS; these interactions promote RLR-mediated type I IFN induction. Interacts with SQSTM1; this interaction inhibits TLR4 signaling via functional regulation of the TRAF6-ECSIT complex. Interacts with cereblon/CRBN; this interaction inhibits the ubiquitination of ECSIT. Ubiquitinated on Lys-372; leading to translocation in the nucleus together with RELA and NFKB1 and expression of NF-kappa-B-dependent genes. In terms of tissue distribution, detected in heart, brain, lung, liver, skeletal muscle, kidney and testis. Detected in embryonic mesoderm and epiblast, and in extraembryonic ectoderm.

It localises to the cytoplasm. The protein resides in the nucleus. Its subcellular location is the mitochondrion. Its function is as follows. Adapter protein that plays a role in different signaling pathways including TLRs and IL-1 pathways or innate antiviral induction signaling. Plays a role in the activation of NF-kappa-B by forming a signal complex with TRAF6 and TAK1/MAP3K7 to activate TAK1/MAP3K7 leading to activation of IKKs. Once ubiquitinated, interacts with the dissociated RELA and NFKB1 proteins and translocates to the nucleus where it induces NF-kappa-B-dependent gene expression. Plays a role in innate antiviral immune response by bridging the pattern recognition receptors RIGI and MDA5/IFIT1 to the MAVS complex at the mitochondrion. Promotes proteolytic activation of MAP3K1. Involved in the BMP signaling pathway. Required for normal embryonic development. In terms of biological role, as part of the MCIA complex, involved in the assembly of the mitochondrial complex I. The chain is Evolutionarily conserved signaling intermediate in Toll pathway, mitochondrial from Mus musculus (Mouse).